A 421-amino-acid chain; its full sequence is UDP-N-acetylglucosamine 1-carboxyvinyltransferase 1 (421 aa).

22–23 is a phosphoenolpyruvate binding site; that stretch reads KN. A UDP-N-acetyl-alpha-D-glucosamine-binding site is contributed by Arg95. The Proton donor role is filled by Cys119. The residue at position 119 (Cys119) is a 2-(S-cysteinyl)pyruvic acid O-phosphothioketal. Residues 124-128, Asp308, and Val330 contribute to the UDP-N-acetyl-alpha-D-glucosamine site; that span reads RPIEQ.

This sequence belongs to the EPSP synthase family. MurA subfamily.

The protein resides in the cytoplasm. The catalysed reaction is phosphoenolpyruvate + UDP-N-acetyl-alpha-D-glucosamine = UDP-N-acetyl-3-O-(1-carboxyvinyl)-alpha-D-glucosamine + phosphate. Its pathway is cell wall biogenesis; peptidoglycan biosynthesis. Cell wall formation. Adds enolpyruvyl to UDP-N-acetylglucosamine. This Staphylococcus aureus (strain bovine RF122 / ET3-1) protein is UDP-N-acetylglucosamine 1-carboxyvinyltransferase 1.